The sequence spans 326 residues: MKAPVRVAVTGAAGQIGYSLLFRIASGEMLGKDQPVILHLLDLPQAQTALKGVMMELEDCAFPLLAGMVATDDPNVAFKDVKVALLVGARPRSKGMERKDLLEANGAIFTVQGKALNDHAARDVKVLVVGNPANTNAWIAMKSAPDLDPKNFTAMLRLDHNRALSQIAAKTGKPVASIEKLAVWGNHSPTMYADYRFATIDGQSVKAMINDDVWNRDVFLPTVGKRGAAIIEARGLSSAASAANAAIDHIRDWVLGTNGKWVTMGVPSDGSYGIPEGVMYGVPVVCENGEYKRVEGLEIDAFSRERMDLTLAELEEERAAIAHLFG.

11–17 (GAAGQIG) is an NAD(+) binding site. Positions 92 and 98 each coordinate substrate. Residues asparagine 105, glutamine 112, and 129–131 (VGN) contribute to the NAD(+) site. The substrate site is built by asparagine 131 and arginine 162. The active-site Proton acceptor is the histidine 187.

It belongs to the LDH/MDH superfamily. MDH type 2 family.

It carries out the reaction (S)-malate + NAD(+) = oxaloacetate + NADH + H(+). Catalyzes the reversible oxidation of malate to oxaloacetate. The sequence is that of Malate dehydrogenase from Chromobacterium violaceum (strain ATCC 12472 / DSM 30191 / JCM 1249 / CCUG 213 / NBRC 12614 / NCIMB 9131 / NCTC 9757 / MK).